Reading from the N-terminus, the 94-residue chain is Pyrimidine/purine nucleoside phosphorylase (94 aa).

The protein belongs to the nucleoside phosphorylase PpnP family.

The catalysed reaction is a purine D-ribonucleoside + phosphate = a purine nucleobase + alpha-D-ribose 1-phosphate. It carries out the reaction adenosine + phosphate = alpha-D-ribose 1-phosphate + adenine. The enzyme catalyses cytidine + phosphate = cytosine + alpha-D-ribose 1-phosphate. It catalyses the reaction guanosine + phosphate = alpha-D-ribose 1-phosphate + guanine. The catalysed reaction is inosine + phosphate = alpha-D-ribose 1-phosphate + hypoxanthine. It carries out the reaction thymidine + phosphate = 2-deoxy-alpha-D-ribose 1-phosphate + thymine. The enzyme catalyses uridine + phosphate = alpha-D-ribose 1-phosphate + uracil. It catalyses the reaction xanthosine + phosphate = alpha-D-ribose 1-phosphate + xanthine. Catalyzes the phosphorolysis of diverse nucleosides, yielding D-ribose 1-phosphate and the respective free bases. Can use uridine, adenosine, guanosine, cytidine, thymidine, inosine and xanthosine as substrates. Also catalyzes the reverse reactions. The sequence is that of Pyrimidine/purine nucleoside phosphorylase from Teredinibacter turnerae (strain ATCC 39867 / T7901).